The following is a 105-amino-acid chain: Mini zinc finger protein 1 (105 aa).

The disordered stretch occupies residues 1–29; that stretch reads MGPQQDRSAAKPYANGSTAAAAAAGRKEN. The ZF-HD dimerization-type; degenerate zinc-finger motif lies at 35-84; sequence YRECQRNHAASIGGHAVDGCREFMASGAEGTAAALLCAACGCHRSFHRRE.

Homo- and heterodimers.

The protein localises to the cytoplasm. Functionally, inhibits zinc finger homeodomain (ZHD) transcription factors, by interacting with them to prevent both their nuclear localization and their DNA-binding properties. The protein is Mini zinc finger protein 1 (MIF1) of Oryza sativa subsp. indica (Rice).